A 337-amino-acid polypeptide reads, in one-letter code: Holliday junction branch migration complex subunit RuvB (337 aa).

The tract at residues 4-186 is large ATPase domain (RuvB-L); that stretch reads ADRLIHPQII…FGIPLRLEFY (183 aa). ATP is bound by residues arginine 26, glycine 67, lysine 70, threonine 71, threonine 72, 133–135, arginine 176, tyrosine 186, and arginine 223; that span reads EDY. Residue threonine 71 participates in Mg(2+) binding. A small ATPAse domain (RuvB-S) region spans residues 187–257; the sequence is NVKDLSSIVA…IAEAALDMLD (71 aa). The tract at residues 260–337 is head domain (RuvB-H); sequence AEGFDYMDRK…NHFNIIKPDA (78 aa). DNA-binding residues include arginine 296, arginine 315, and arginine 320.

Belongs to the RuvB family. As to quaternary structure, homohexamer. Forms an RuvA(8)-RuvB(12)-Holliday junction (HJ) complex. HJ DNA is sandwiched between 2 RuvA tetramers; dsDNA enters through RuvA and exits via RuvB. An RuvB hexamer assembles on each DNA strand where it exits the tetramer. Each RuvB hexamer is contacted by two RuvA subunits (via domain III) on 2 adjacent RuvB subunits; this complex drives branch migration. In the full resolvosome a probable DNA-RuvA(4)-RuvB(12)-RuvC(2) complex forms which resolves the HJ.

The protein resides in the cytoplasm. The enzyme catalyses ATP + H2O = ADP + phosphate + H(+). The RuvA-RuvB-RuvC complex processes Holliday junction (HJ) DNA during genetic recombination and DNA repair, while the RuvA-RuvB complex plays an important role in the rescue of blocked DNA replication forks via replication fork reversal (RFR). RuvA specifically binds to HJ cruciform DNA, conferring on it an open structure. The RuvB hexamer acts as an ATP-dependent pump, pulling dsDNA into and through the RuvAB complex. RuvB forms 2 homohexamers on either side of HJ DNA bound by 1 or 2 RuvA tetramers; 4 subunits per hexamer contact DNA at a time. Coordinated motions by a converter formed by DNA-disengaged RuvB subunits stimulates ATP hydrolysis and nucleotide exchange. Immobilization of the converter enables RuvB to convert the ATP-contained energy into a lever motion, pulling 2 nucleotides of DNA out of the RuvA tetramer per ATP hydrolyzed, thus driving DNA branch migration. The RuvB motors rotate together with the DNA substrate, which together with the progressing nucleotide cycle form the mechanistic basis for DNA recombination by continuous HJ branch migration. Branch migration allows RuvC to scan DNA until it finds its consensus sequence, where it cleaves and resolves cruciform DNA. The sequence is that of Holliday junction branch migration complex subunit RuvB from Shewanella halifaxensis (strain HAW-EB4).